The sequence spans 52 residues: Gastrin/cholecystokinin-like peptide (52 aa).

The protein belongs to the gastrin/cholecystokinin family.

It is found in the secreted. Functionally, may control digestion processes. The sequence is that of Gastrin/cholecystokinin-like peptide from Trachemys scripta (Red-eared slider turtle).